A 736-amino-acid chain; its full sequence is Microtubule-associated protein mu-2 (736 aa).

Belongs to the orthoreovirus mu-2 protein family. As to quaternary structure, interacts with protein mu-NS; in viral inclusions. Interacts with polymerase lambda-3; this interaction stimulates the ATPase activity of mu-2. The cofactor is a divalent metal cation.

It localises to the virion. It is found in the host cytoplasm. Its subcellular location is the host cytoskeleton. Functionally, minor inner capsid (core) component. Displays NTPase and RNA 5'-triphosphatase (RTPase) activities. ATP is the preferred substrate for hydrolysis. May function as a cofactor of polymerase lambda-3. Associates with microtubules and plays a role in the formation, structural organization and morphology of viral inclusions, where the assembly of cores and the replication of viral RNA occur. Together with mu-NS, recruits the other core proteins to these inclusions. In Mammalia (T1L), this protein is Microtubule-associated protein mu-2 (M1).